Here is a 647-residue protein sequence, read N- to C-terminus: Protein arginine N-methyltransferase 7 (647 aa).

SAM-dependent MTase PRMT-type domains are found at residues 12–332 (EREW…FSLW) and 337–647 (GKDK…SEDS). Residues Glu140 and Glu149 contribute to the active site.

It belongs to the class I-like SAM-binding methyltransferase superfamily. Protein arginine N-methyltransferase family. PRMT7 subfamily.

In terms of biological role, arginine methyltransferase that can both catalyze the formation of omega-N monomethylarginine (MMA) and symmetrical dimethylarginine (sDMA). The chain is Protein arginine N-methyltransferase 7 (prmt-7) from Caenorhabditis elegans.